Consider the following 972-residue polypeptide: N-alpha-acetyltransferase 25, NatB auxiliary subunit (972 aa).

4 TPR repeats span residues 11–44 (NDRRLRPIYDYLDNGNNKMAIQQADKLLKKHKDL), 45–78 (HCAKVLKAIGLQRTGKQEEAFTLAQEVAALEPTD), 79–112 (DNSLQALTILYREMHRPELVTKLYEAAVKKVPNS), and 114–146 (EYHSHLFMAYARVGEYKKMQQAGMALYKIVPKN).

It belongs to the MDM20/NAA25 family. As to quaternary structure, component of the N-terminal acetyltransferase B (NatB) complex which is composed of NAA20 and NAA25.

It localises to the cytoplasm. In terms of biological role, non-catalytic subunit of the NatB complex which catalyzes acetylation of the N-terminal methionine residues of peptides beginning with Met-Asp, Met-Glu, Met-Asn and Met-Gln. May play a role in normal cell-cycle progression. This is N-alpha-acetyltransferase 25, NatB auxiliary subunit (NAA25) from Homo sapiens (Human).